Reading from the N-terminus, the 147-residue chain is MKLILKENVDNLGHIGDIVKVAPGYARNFLLPKGFAIEATEKNAKALEHAKRHLEYKKNKVLEAAKQLAAKIEGLSLSIAHQAGADDRLFGAVTNMELAEQLKANGIEVDRKRIVLAEPIKQLGDFTATVKIHPEVSATLKVAVTKA.

Belongs to the bacterial ribosomal protein bL9 family.

Functionally, binds to the 23S rRNA. The protein is Large ribosomal subunit protein bL9 of Geobacter sp. (strain M21).